The primary structure comprises 385 residues: Phosphate acyltransferase (385 aa).

The span at 1–17 (MAAGTSIGTTPGGSTSP) shows a compositional bias: low complexity. The disordered stretch occupies residues 1–28 (MAAGTSIGTTPGGSTSPETPPEHGLTGT).

Belongs to the PlsX family. In terms of assembly, homodimer. Probably interacts with PlsY.

The protein localises to the cytoplasm. It carries out the reaction a fatty acyl-[ACP] + phosphate = an acyl phosphate + holo-[ACP]. Its pathway is lipid metabolism; phospholipid metabolism. In terms of biological role, catalyzes the reversible formation of acyl-phosphate (acyl-PO(4)) from acyl-[acyl-carrier-protein] (acyl-ACP). This enzyme utilizes acyl-ACP as fatty acyl donor, but not acyl-CoA. In Dinoroseobacter shibae (strain DSM 16493 / NCIMB 14021 / DFL 12), this protein is Phosphate acyltransferase.